Here is a 518-residue protein sequence, read N- to C-terminus: Receptor-interacting serine/threonine-protein kinase 3 (518 aa).

Ser2 carries the post-translational modification Phosphoserine. Positions Leu21 to Phe287 constitute a Protein kinase domain. Val27–Val35 contacts ATP. A Glycyl lysine isopeptide (Lys-Gly) (interchain with G-Cter in ubiquitin) cross-link involves residue Lys42. ATP is bound at residue Lys50. Asp142 (proton acceptor) is an active-site residue. At Ser164 the chain carries Phosphoserine. A Phosphothreonine modification is found at Thr182. Phosphoserine; by autocatalysis is present on residues Ser199 and Ser227. Residue Thr252 is modified to Phosphothreonine. Residue Ser299 is modified to Phosphoserine. Thr333 carries the post-translational modification Phosphothreonine. Glycyl lysine isopeptide (Lys-Gly) (interchain with G-Cter in ubiquitin) cross-links involve residues Lys351 and Lys363. The disordered stretch occupies residues Glu355–Pro443. A compositionally biased stretch (polar residues) spans Thr384 to Met408. Position 389 is a phosphoserine (Ser389). At Thr401 the chain carries Phosphothreonine. The RIP homotypic interaction motif (RHIM) signature appears at Val450–Leu466. The tract at residues Thr476 to Lys518 is disordered. A Glycyl lysine isopeptide (Lys-Gly) (interchain with G-Cter in ubiquitin) cross-link involves residue Lys518.

Belongs to the protein kinase superfamily. TKL Ser/Thr protein kinase family. Interacts (via RIP homotypic interaction motif) with RIPK1 (via RIP homotypic interaction motif); this interaction induces RIPK1 phosphorylation and formation of a RIPK1-RIPK3 necrosis-inducing complex. Interacts with MLKL; the interaction is direct and triggers necroptosis. Interacts with ZBP1 (via RIP homotypic interaction motif); interaction with ZBP1 activates RIPK3, triggering necroptosis. Upon TNF-induced necrosis, the RIPK1-RIPK3 dimer further interacts with PGAM5 and MLKL; the formation of this complex leads to PGAM5 phosphorylation and increase in PGAM5 phosphatase activity. Binds TRAF2 and is recruited to the TNFR-1 signaling complex. Interacts with PYGL, GLUL and GLUD1; these interactions result in activation of these metabolic enzymes. Interacts with BIRC2/c-IAP1, BIRC3/c-IAP2 and XIAP/BIRC4. Interacts with ARHGEF2. Interacts with PELI1 (via atypical FHA domain); the phosphorylated form at Thr-182 binds preferentially to PELI1. Interacts with BUB1B, TRAF2 and STUB1. Interacts with CASP6. Component of the AIM2 PANoptosome complex, a multiprotein complex that drives inflammatory cell death (PANoptosis). In terms of assembly, (Microbial infection) Interacts (via RIP homotypic interaction motif/RHIM) with herpes simplex virus 1/HHV-1 protein RIR1/ICP6 (via RHIM); this interaction may induce heteromeric amyloid assemblies and prevent necroptosis activation. As to quaternary structure, (Microbial infection) Interacts (via RIP homotypic interaction motif/RHIM) with herpes simplex virus 2/HHV-2 protein RIR1/ICP10 (via RHIM); this interaction prevents necroptosis activation. In terms of processing, (Microbial infection) Proteolytically cleaved by S.flexneri OspD3 within the RIP homotypic interaction motif (RHIM), leading to its degradation and inhibition of necroptosis. Post-translationally, RIPK1 and RIPK3 undergo reciprocal auto- and trans-phosphorylation. Autophosphorylated following interaction with ZBP1. Phosphorylation of Ser-199 plays a role in the necroptotic function of RIPK3. Autophosphorylates at Ser-227 following activation by ZBP1: phosphorylation at these sites is a hallmark of necroptosis and is required for binding MLKL. Phosphorylation at Thr-182 is important for its kinase activity, interaction with PELI1 and PELI1-mediated 'Lys-48'-linked polyubiquitination and for its ability to mediate TNF-induced necroptosis. Polyubiquitinated with 'Lys-48' and 'Lys-63'-linked chains by BIRC2/c-IAP1 and BIRC3/c-IAP2, leading to activation of NF-kappa-B. Polyubiquitinated with 'Lys-48'-linked chains by PELI1 leading to its subsequent proteasome-dependent degradation. Ubiquitinated by STUB1 leading to its subsequent proteasome-dependent degradation. Deubiquitinated by USP22. In terms of tissue distribution, highly expressed in the pancreas. Detected at lower levels in heart, placenta, lung and kidney. Expression is significantly increased in colon and lung cancers.

Its subcellular location is the cytoplasm. It localises to the cytosol. The protein localises to the nucleus. It carries out the reaction L-seryl-[protein] + ATP = O-phospho-L-seryl-[protein] + ADP + H(+). It catalyses the reaction L-threonyl-[protein] + ATP = O-phospho-L-threonyl-[protein] + ADP + H(+). Activity is stimulated by ZBP1, which senses double-stranded Z-RNA structures. RIPK3-dependent necroptosis is inhibited by RIPK1: RIPK1 prevents the ZBP1-induced activation of RIPK3 via FADD-mediated recruitment of CASP8, which cleaves RIPK1 and limits TNF-induced necroptosis. Serine/threonine-protein kinase that activates necroptosis and apoptosis, two parallel forms of cell death. Necroptosis, a programmed cell death process in response to death-inducing TNF-alpha family members, is triggered by RIPK3 following activation by ZBP1. Activated RIPK3 forms a necrosis-inducing complex and mediates phosphorylation of MLKL, promoting MLKL localization to the plasma membrane and execution of programmed necrosis characterized by calcium influx and plasma membrane damage. In addition to TNF-induced necroptosis, necroptosis can also take place in the nucleus in response to orthomyxoviruses infection: following ZBP1 activation, which senses double-stranded Z-RNA structures, nuclear RIPK3 catalyzes phosphorylation and activation of MLKL, promoting disruption of the nuclear envelope and leakage of cellular DNA into the cytosol. Also regulates apoptosis: apoptosis depends on RIPK1, FADD and CASP8, and is independent of MLKL and RIPK3 kinase activity. Phosphorylates RIPK1: RIPK1 and RIPK3 undergo reciprocal auto- and trans-phosphorylation. In some cell types, also able to restrict viral replication by promoting cell death-independent responses. In response to Zika virus infection in neurons, promotes a cell death-independent pathway that restricts viral replication: together with ZBP1, promotes a death-independent transcriptional program that modifies the cellular metabolism via up-regulation expression of the enzyme ACOD1/IRG1 and production of the metabolite itaconate. Itaconate inhibits the activity of succinate dehydrogenase, generating a metabolic state in neurons that suppresses replication of viral genomes. RIPK3 binds to and enhances the activity of three metabolic enzymes: GLUL, GLUD1, and PYGL. These metabolic enzymes may eventually stimulate the tricarboxylic acid cycle and oxidative phosphorylation, which could result in enhanced ROS production. In terms of biological role, (Microbial infection) In case of herpes simplex virus 1/HHV-1 infection, forms heteromeric amyloid structures with HHV-1 protein RIR1/ICP6 which may inhibit RIPK3-mediated necroptosis, thereby preventing host cell death pathway and allowing viral evasion. The chain is Receptor-interacting serine/threonine-protein kinase 3 from Homo sapiens (Human).